Here is a 1077-residue protein sequence, read N- to C-terminus: Error-prone DNA polymerase (1077 aa).

The protein belongs to the DNA polymerase type-C family. DnaE2 subfamily.

It localises to the cytoplasm. It catalyses the reaction DNA(n) + a 2'-deoxyribonucleoside 5'-triphosphate = DNA(n+1) + diphosphate. DNA polymerase involved in damage-induced mutagenesis and translesion synthesis (TLS). It is not the major replicative DNA polymerase. The sequence is that of Error-prone DNA polymerase from Brucella melitensis biotype 1 (strain ATCC 23456 / CCUG 17765 / NCTC 10094 / 16M).